The sequence spans 35 residues: U1-theraphotoxin-Hhn1a (35 aa).

Disulfide bonds link Cys-2–Cys-16, Cys-9–Cys-21, and Cys-15–Cys-28.

This sequence belongs to the neurotoxin 10 (Hwtx-1) family. 24 (Hwtx-6) subfamily. As to expression, expressed by the venom gland.

It is found in the secreted. Gating-modifier toxin that dose-dependently inhibits inactivation of voltage-gated sodium channels and reduces the peak of sodium current in cockroach DUM neurons. In vivo, reversibly paralyzes cockroaches for several hours, paralyzes rat after intracerebroventricular injection and blocks the neuromuscular transmission of the isolated rat phrenic nerve-diaphragm preparation. The chain is U1-theraphotoxin-Hhn1a from Cyriopagopus hainanus (Chinese bird spider).